The following is a 289-amino-acid chain: Phenylalanine-4-hydroxylase (289 aa).

3 residues coordinate Fe cation: His-144, His-149, and Glu-189.

Belongs to the biopterin-dependent aromatic amino acid hydroxylase family. Fe(2+) is required as a cofactor.

It carries out the reaction (6R)-L-erythro-5,6,7,8-tetrahydrobiopterin + L-phenylalanine + O2 = (4aS,6R)-4a-hydroxy-L-erythro-5,6,7,8-tetrahydrobiopterin + L-tyrosine. It functions in the pathway amino-acid degradation; L-phenylalanine degradation; acetoacetate and fumarate from L-phenylalanine: step 1/6. This is Phenylalanine-4-hydroxylase (phhA) from Vibrio cholerae serotype O1 (strain ATCC 39315 / El Tor Inaba N16961).